Reading from the N-terminus, the 775-residue chain is Mitosis inducer protein kinase cdr2 (775 aa).

A Protein kinase domain is found at 10–262 (WELGLSLGSG…MEQIREHPFL (253 aa)). ATP contacts are provided by residues 16 to 24 (LGSGGPNSS) and K39. D133 functions as the Proton acceptor in the catalytic mechanism. Phosphoserine occurs at positions 309, 311, and 476. Low complexity predominate over residues 549-563 (NNIDNNNYNQPYANA). The interval 549 to 620 (NNIDNNNYNQ…TKKKLSGSPF (72 aa)) is disordered. Residues 584–593 (LSQSPASYDS) show a composition bias toward polar residues. Phosphoserine occurs at positions 587 and 632.

This sequence belongs to the protein kinase superfamily. CAMK Ser/Thr protein kinase family. NIM1 subfamily. In terms of assembly, interacts with blt1 and mid1. In terms of processing, autophosphorylated.

The enzyme catalyses L-seryl-[protein] + ATP = O-phospho-L-seryl-[protein] + ADP + H(+). It carries out the reaction L-threonyl-[protein] + ATP = O-phospho-L-threonyl-[protein] + ADP + H(+). In terms of biological role, acts as a mitotic inducer. In G2 it negatively regulates wee1, a mitotic inhibitor. Also has a role in cytokinesis where it required for proper septum formation. The polypeptide is Mitosis inducer protein kinase cdr2 (cdr2) (Schizosaccharomyces pombe (strain 972 / ATCC 24843) (Fission yeast)).